A 649-amino-acid polypeptide reads, in one-letter code: Threonine--tRNA ligase (649 aa).

Residues 1-66 (MVQITLPDGS…DNDAQLAIVT (66 aa)) form the TGS domain. The catalytic stretch occupies residues 247–538 (DHRKIGRELD…LIENHAGAMP (292 aa)). Zn(2+)-binding residues include Cys338, His389, and His515.

It belongs to the class-II aminoacyl-tRNA synthetase family. In terms of assembly, homodimer. The cofactor is Zn(2+).

The protein resides in the cytoplasm. It catalyses the reaction tRNA(Thr) + L-threonine + ATP = L-threonyl-tRNA(Thr) + AMP + diphosphate + H(+). In terms of biological role, catalyzes the attachment of threonine to tRNA(Thr) in a two-step reaction: L-threonine is first activated by ATP to form Thr-AMP and then transferred to the acceptor end of tRNA(Thr). Also edits incorrectly charged L-seryl-tRNA(Thr). In Bordetella bronchiseptica (strain ATCC BAA-588 / NCTC 13252 / RB50) (Alcaligenes bronchisepticus), this protein is Threonine--tRNA ligase.